The chain runs to 202 residues: MYSANGHFKKHWQNYVKTWFNQPARKTRRRIARQKKAVKISPRPTAGTLRPIVHGQTLKYNMKVRSGRGFSLEELKAAGIPKKLAPTIGIAVDHRRRNRSLEGLQTNVQRLEDLQGQLVVFPRRASRSRLVILPPRNCLTATQVHGAYMPIEREKHQLILSKVLKKMKSFNAYAKLRVERTNERHIGARMKRAAEAEKEEKK.

This sequence belongs to the eukaryotic ribosomal protein eL13 family.

This chain is Large ribosomal subunit protein eL13 (RPL13), found in Nicotiana tabacum (Common tobacco).